The sequence spans 806 residues: Phosphatidylinositol 4-kinase beta (806 aa).

Residues 55–247 (LDKVKLIRGS…GTKLRKLILS (193 aa)) enclose the PIK helical domain. Disordered stretches follow at residues 69-104 (LDKI…SASR) and 253-310 (AHKK…DEPV). The span at 283-302 (DATVSISLSSNLKRTSSNPK) shows a compositional bias: polar residues. One can recognise a PI3K/PI4K catalytic domain in the interval 525-791 (EPWQEKVRRI…MVDGSMRSIT (267 aa)). Positions 531–537 (VRRIREG) are G-loop. Positions 658–666 (QVKDRHNGN) are catalytic loop. Residues 677-701 (HIDFGFILSSSPRNLGFETSAFKLT) are activation loop.

The protein belongs to the PI3/PI4-kinase family. Type III PI4K subfamily. The cofactor is Mg(2+). Mn(2+) is required as a cofactor.

It localises to the endomembrane system. It is found in the mitochondrion outer membrane. Its subcellular location is the rough endoplasmic reticulum membrane. The catalysed reaction is a 1,2-diacyl-sn-glycero-3-phospho-(1D-myo-inositol) + ATP = a 1,2-diacyl-sn-glycero-3-phospho-(1D-myo-inositol 4-phosphate) + ADP + H(+). In terms of biological role, phosphorylates phosphatidylinositol (PI) in the first committed step in the production of the second messenger inositol-1,4,5,-trisphosphate (PIP). May play an important role in the inner ear development. The protein is Phosphatidylinositol 4-kinase beta (pi4kb) of Xenopus tropicalis (Western clawed frog).